The chain runs to 696 residues: Glycine--tRNA ligase beta subunit (696 aa).

Belongs to the class-II aminoacyl-tRNA synthetase family. As to quaternary structure, tetramer of two alpha and two beta subunits.

The protein resides in the cytoplasm. It carries out the reaction tRNA(Gly) + glycine + ATP = glycyl-tRNA(Gly) + AMP + diphosphate. The sequence is that of Glycine--tRNA ligase beta subunit from Aromatoleum aromaticum (strain DSM 19018 / LMG 30748 / EbN1) (Azoarcus sp. (strain EbN1)).